A 368-amino-acid chain; its full sequence is Proteinase-activated receptor 3 (368 aa).

Positions 1 to 21 (MEMKVLILVGVRLLFLPTTVC) are cleaved as a signal peptide. A propeptide spans 22 to 37 (QSGMKHVSDNSALTAE) (removed for receptor activation). The Extracellular segment spans residues 38–93 (SFNGNEHSFEEFPLSDIEGWTGATTTIKAKCPEESITTLHVNNATMGYLRSSLSTK). Asn-80 is a glycosylation site (N-linked (GlcNAc...) asparagine). A helical membrane pass occupies residues 94-114 (VIPAIYILVFVIGVPANIVTL). Residues 115 to 123 (WKLSSRTKS) are Cytoplasmic-facing. A helical transmembrane segment spans residues 124-144 (ICLVIFHTNLAIADLLFCVTL). The Extracellular portion of the chain corresponds to 145 to 166 (PFKIAYHLNGNDWVFGEVMCRV). Cys-164 and Cys-243 are oxidised to a cystine. Residues 167-187 (TTVAFYGNMYCAILILTCMGI) form a helical membrane-spanning segment. The Cytoplasmic portion of the chain corresponds to 188–208 (NRYLATVHPFTYRKLPKRNFT). Residues 209 to 229 (LLMCGVVWVMVVLYMLPLAIL) form a helical membrane-spanning segment. The Extracellular segment spans residues 230–257 (KQEYHLVQPGITTCHDVHDTCESPLPFQ). The helical transmembrane segment at 258 to 278 (FYYFVSLAFFGFLIPFVVSVF) threads the bilayer. The Cytoplasmic segment spans residues 279 to 300 (CYTTLIHKLNAQDRKWLRYIKA). The helical transmembrane segment at 301 to 321 (VLLILVIFTICFAPTNIILII) threads the bilayer. Residues 322–338 (HHANYYYSNTDSLYFMY) lie on the Extracellular side of the membrane. Residues 339-359 (LIALCLGSLNSCLDPFLYFIM) form a helical membrane-spanning segment. Residues 360-368 (SKIVDQLTS) are Cytoplasmic-facing.

This sequence belongs to the G-protein coupled receptor 1 family. In terms of assembly, interacts with INSC/inscuteable and GPSM2. Post-translationally, a proteolytic cleavage generates a new N-terminus that functions as a tethered ligand.

It is found in the cell membrane. Its function is as follows. Receptor for activated thrombin coupled to G proteins that stimulate phosphoinositide hydrolysis. This is Proteinase-activated receptor 3 (F2rl2) from Rattus norvegicus (Rat).